A 668-amino-acid chain; its full sequence is Hemocyanin subunit D (668 aa).

Positions 1-22 (MDTRVLRLTLALVALSGVLADS) are cleaved as a signal peptide. 3 residues coordinate Cu cation: His-206, His-210, and His-236. An N-linked (GlcNAc...) asparagine glycan is attached at Asn-322. Cu cation contacts are provided by His-357, His-361, and His-397. A disulfide bond links Cys-567 and Cys-614.

It belongs to the tyrosinase family. Hemocyanin subfamily. 36-chain polymer consisting of 6 hexamers, each of which includes 4 different chains, A, B, C and D. In terms of tissue distribution, hemolymph.

It localises to the secreted. The protein resides in the extracellular space. Functionally, hemocyanins are copper-containing oxygen carriers occurring freely dissolved in the hemolymph of many mollusks and arthropods. This is Hemocyanin subunit D (HCD) from Scutigera coleoptrata (House centipede).